The chain runs to 220 residues: Thiamine-phosphate synthase (220 aa).

4-amino-2-methyl-5-(diphosphooxymethyl)pyrimidine-binding positions include 46–50 (QFREK) and Asn83. Asp84 and Asp103 together coordinate Mg(2+). Residue Ser122 participates in 4-amino-2-methyl-5-(diphosphooxymethyl)pyrimidine binding. 149-151 (TNS) serves as a coordination point for 2-[(2R,5Z)-2-carboxy-4-methylthiazol-5(2H)-ylidene]ethyl phosphate. Residue Lys152 coordinates 4-amino-2-methyl-5-(diphosphooxymethyl)pyrimidine. Residues Gly181 and 201–202 (IS) each bind 2-[(2R,5Z)-2-carboxy-4-methylthiazol-5(2H)-ylidene]ethyl phosphate.

It belongs to the thiamine-phosphate synthase family. The cofactor is Mg(2+).

It carries out the reaction 2-[(2R,5Z)-2-carboxy-4-methylthiazol-5(2H)-ylidene]ethyl phosphate + 4-amino-2-methyl-5-(diphosphooxymethyl)pyrimidine + 2 H(+) = thiamine phosphate + CO2 + diphosphate. The catalysed reaction is 2-(2-carboxy-4-methylthiazol-5-yl)ethyl phosphate + 4-amino-2-methyl-5-(diphosphooxymethyl)pyrimidine + 2 H(+) = thiamine phosphate + CO2 + diphosphate. It catalyses the reaction 4-methyl-5-(2-phosphooxyethyl)-thiazole + 4-amino-2-methyl-5-(diphosphooxymethyl)pyrimidine + H(+) = thiamine phosphate + diphosphate. The protein operates within cofactor biosynthesis; thiamine diphosphate biosynthesis; thiamine phosphate from 4-amino-2-methyl-5-diphosphomethylpyrimidine and 4-methyl-5-(2-phosphoethyl)-thiazole: step 1/1. Functionally, condenses 4-methyl-5-(beta-hydroxyethyl)thiazole monophosphate (THZ-P) and 2-methyl-4-amino-5-hydroxymethyl pyrimidine pyrophosphate (HMP-PP) to form thiamine monophosphate (TMP). This chain is Thiamine-phosphate synthase, found in Mannheimia succiniciproducens (strain KCTC 0769BP / MBEL55E).